The sequence spans 484 residues: UDP-N-acetylmuramoyl-L-alanyl-D-glutamate--L-lysine ligase (484 aa).

UDP-N-acetyl-alpha-D-muramoyl-L-alanyl-D-glutamate is bound at residue S43. 119 to 125 (GTKGKTT) provides a ligand contact to ATP. Residues 161–162 (TT), S188, and R196 each bind UDP-N-acetyl-alpha-D-muramoyl-L-alanyl-D-glutamate. Residue K230 is modified to N6-carboxylysine. Residues 405-408 (DDPN) carry the L-lysine recognition motif motif.

The protein belongs to the MurCDEF family. MurE subfamily. Carboxylation is probably crucial for Mg(2+) binding and, consequently, for the gamma-phosphate positioning of ATP.

Its subcellular location is the cytoplasm. It carries out the reaction UDP-N-acetyl-alpha-D-muramoyl-L-alanyl-D-glutamate + L-lysine + ATP = UDP-N-acetyl-alpha-D-muramoyl-L-alanyl-gamma-D-glutamyl-L-lysine + ADP + phosphate + H(+). Its pathway is cell wall biogenesis; peptidoglycan biosynthesis. Functionally, catalyzes the addition of L-lysine to the nucleotide precursor UDP-N-acetylmuramoyl-L-alanyl-D-glutamate (UMAG) in the biosynthesis of bacterial cell-wall peptidoglycan. The protein is UDP-N-acetylmuramoyl-L-alanyl-D-glutamate--L-lysine ligase of Streptococcus agalactiae serotype V (strain ATCC BAA-611 / 2603 V/R).